We begin with the raw amino-acid sequence, 259 residues long: MENVYISSYSSNEQTSMAVAATDIRELLSQYVDDANLEDLIEWAMEKSSKYYIKNIGNTKSNIEETKFESKNNIGIEYSKDSRNKLSYRNKPSIATNLEYKTLCDMIKGTSGTEKEFLRYLLFGIKCIKKGVEYNIDKIKDVSYNDYFNVLDEKYNTPCPNCKSRNTTPMMIQTRAADEPPLVRHACRDCKQHFKPPKFRAFRNLNVTTQSIHENKEITEILPDNNPSPPESPEPASPIDDGLIRSTFDRNDEPPEDDE.

The TFIIS-type zinc finger occupies 155–195 (YNTPCPNCKSRNTTPMMIQTRAADEPPLVRHACRDCKQHFK). Positions 159, 162, 187, and 190 each coordinate Zn(2+). The interval 214 to 259 (ENKEITEILPDNNPSPPESPEPASPIDDGLIRSTFDRNDEPPEDDE) is disordered. The segment covering 226 to 236 (NPSPPESPEPA) has biased composition (pro residues).

It belongs to the poxviridae DNA-directed RNA polymerase 30 kDa subunit family. As to quaternary structure, the DNA-dependent RNA polymerase (vRNAP) consists of eight subunits encoded by early viral genes and termed according to their apparent molecular masses Rpo147, Rpo132, Rpo35, Rpo30, Rpo22, Rpo19, Rpo18, and Rpo7. The same holoenzyme, with the addition of the transcription-specificity factor RAP94, is used for early gene expression.

The protein resides in the virion. It localises to the host cytoplasm. The enzyme catalyses RNA(n) + a ribonucleoside 5'-triphosphate = RNA(n+1) + diphosphate. Functionally, part of the DNA-dependent RNA polymerase which catalyzes the transcription of viral DNA into RNA using the four ribonucleoside triphosphates as substrates. Responsible for the transcription of early, intermediate and late genes. DNA-dependent RNA polymerase associates with the early transcription factor (ETF), itself composed of OPG118/D6 and OPG134/A8, thereby allowing the early genes transcription. Late transcription, and probably also intermediate transcription, require newly synthesized RNA polymerase. In Homo sapiens (Human), this protein is DNA-directed RNA polymerase 30 kDa polypeptide (OPG066).